A 108-amino-acid polypeptide reads, in one-letter code: T-cell acute lymphocytic leukemia protein 2 (108 aa).

Residues 2 to 54 form the bHLH domain; sequence TRKIFTNTRERWRQQNVNSAFAKLRKLIPTHPPDKKLSKNETLRLAMRYINFL. The interval 89–108 is disordered; that stretch reads DRTLLENYQVPSPGPSHHIP.

This is T-cell acute lymphocytic leukemia protein 2 (TAL2) from Homo sapiens (Human).